A 390-amino-acid chain; its full sequence is Leu/Ile/Val-binding protein homolog 6 (390 aa).

Positions 1–21 (MKKIALTALAVFSLAASAAYA) are cleaved as a signal peptide.

Belongs to the leucine-binding protein family.

Functionally, component of an amino-acid transport system. The chain is Leu/Ile/Val-binding protein homolog 6 from Brucella melitensis biotype 1 (strain ATCC 23456 / CCUG 17765 / NCTC 10094 / 16M).